Here is a 253-residue protein sequence, read N- to C-terminus: Transcription factor bHLH106 (253 aa).

The region spanning 66–115 (AALRNHKEAERRRRERINSHLNKLRNVLSCNSKTDKATLLAKVVQRVREL) is the bHLH domain.

As to quaternary structure, homodimer.

It localises to the nucleus. In Arabidopsis thaliana (Mouse-ear cress), this protein is Transcription factor bHLH106 (BHLH106).